Consider the following 356-residue polypeptide: Protein U8 (356 aa).

This sequence belongs to the herpesviridae US22 family.

The protein is Protein U8 (U8) of Homo sapiens (Human).